Here is a 506-residue protein sequence, read N- to C-terminus: Maturase K (506 aa).

It belongs to the intron maturase 2 family. MatK subfamily.

Its subcellular location is the plastid. The protein localises to the chloroplast. In terms of biological role, usually encoded in the trnK tRNA gene intron. Probably assists in splicing its own and other chloroplast group II introns. This chain is Maturase K, found in Carica papaya (Papaya).